Reading from the N-terminus, the 543-residue chain is Peptide chain release factor 3 (543 aa).

In terms of domain architecture, tr-type G spans 21 to 289; it reads KKRRTFAIIS…ALSDWAPSPL (269 aa). Residues 30-37, 98-102, and 152-155 each bind GTP; these read SHPDAGKT, DTPGH, and NKLD.

The protein belongs to the TRAFAC class translation factor GTPase superfamily. Classic translation factor GTPase family. PrfC subfamily.

It is found in the cytoplasm. Increases the formation of ribosomal termination complexes and stimulates activities of RF-1 and RF-2. It binds guanine nucleotides and has strong preference for UGA stop codons. It may interact directly with the ribosome. The stimulation of RF-1 and RF-2 is significantly reduced by GTP and GDP, but not by GMP. This chain is Peptide chain release factor 3, found in Thiobacillus denitrificans (strain ATCC 25259 / T1).